Consider the following 206-residue polypeptide: MSNVRSKICGITRIEDALAAAEAGADAIGFVFYAKSPRAVDVRQARAIIAELPPFVTTVGLFVNASRCELNEILEVVPLDLLQFHGDETPQDCEGYHRPWIKALRVRPGDDLEAACQRYAGARGILLDTYVPGVPGGTGEAFDWSLVPARLGKPIILAGGLSADNVGQAIARVKPYAVDVSGGVEQAKGIKDAAKIEAFMRAVKQA.

This sequence belongs to the TrpF family.

The enzyme catalyses N-(5-phospho-beta-D-ribosyl)anthranilate = 1-(2-carboxyphenylamino)-1-deoxy-D-ribulose 5-phosphate. It participates in amino-acid biosynthesis; L-tryptophan biosynthesis; L-tryptophan from chorismate: step 3/5. The polypeptide is N-(5'-phosphoribosyl)anthranilate isomerase (Pseudomonas putida (strain ATCC 700007 / DSM 6899 / JCM 31910 / BCRC 17059 / LMG 24140 / F1)).